A 494-amino-acid polypeptide reads, in one-letter code: Ribose import ATP-binding protein RbsA (494 aa).

ABC transporter domains follow at residues 3–240 (IEMK…VGRS) and 250–494 (SQIS…TGGE). Residue 35-42 (GENGAGKS) participates in ATP binding.

This sequence belongs to the ABC transporter superfamily. Ribose importer (TC 3.A.1.2.1) family. As to quaternary structure, the complex is composed of an ATP-binding protein (RbsA), two transmembrane proteins (RbsC) and a solute-binding protein (RbsB).

The protein localises to the cell membrane. The enzyme catalyses D-ribose(out) + ATP + H2O = D-ribose(in) + ADP + phosphate + H(+). Part of the ABC transporter complex RbsABC involved in ribose import. Responsible for energy coupling to the transport system. The chain is Ribose import ATP-binding protein RbsA from Bacillus cereus (strain ZK / E33L).